A 395-amino-acid chain; its full sequence is Probable alcohol dehydrogenase EutG (395 aa).

Residues D57, 116–120, 156–160, K178, and 197–201 each bind NAD(+); these read GSVLD, TTAGT, and LTEGV. Residues D212, H216, H281, and H295 each contribute to the Fe cation site. Residues H295 and D354 each coordinate NAD(+).

This sequence belongs to the iron-containing alcohol dehydrogenase family. Requires Fe cation as cofactor.

The protein localises to the bacterial microcompartment. The catalysed reaction is ethanol + NAD(+) = acetaldehyde + NADH + H(+). It participates in amine and polyamine degradation; ethanolamine degradation. In terms of biological role, may act on the acetaldehyde produced from the degradation of ethanolamine, producing ethanol. Active on acetaldehyde and isobutyraldehyde in vitro. In vitro works equally well with NADH or NADPH. The polypeptide is Probable alcohol dehydrogenase EutG (eutG) (Escherichia coli (strain K12)).